The chain runs to 173 residues: Crossover junction endodeoxyribonuclease RuvC (173 aa).

Active-site residues include Asp8, Glu67, and Asp139. 3 residues coordinate Mg(2+): Asp8, Glu67, and Asp139.

This sequence belongs to the RuvC family. In terms of assembly, homodimer which binds Holliday junction (HJ) DNA. The HJ becomes 2-fold symmetrical on binding to RuvC with unstacked arms; it has a different conformation from HJ DNA in complex with RuvA. In the full resolvosome a probable DNA-RuvA(4)-RuvB(12)-RuvC(2) complex forms which resolves the HJ. Mg(2+) serves as cofactor.

It localises to the cytoplasm. The enzyme catalyses Endonucleolytic cleavage at a junction such as a reciprocal single-stranded crossover between two homologous DNA duplexes (Holliday junction).. Its function is as follows. The RuvA-RuvB-RuvC complex processes Holliday junction (HJ) DNA during genetic recombination and DNA repair. Endonuclease that resolves HJ intermediates. Cleaves cruciform DNA by making single-stranded nicks across the HJ at symmetrical positions within the homologous arms, yielding a 5'-phosphate and a 3'-hydroxyl group; requires a central core of homology in the junction. The consensus cleavage sequence is 5'-(A/T)TT(C/G)-3'. Cleavage occurs on the 3'-side of the TT dinucleotide at the point of strand exchange. HJ branch migration catalyzed by RuvA-RuvB allows RuvC to scan DNA until it finds its consensus sequence, where it cleaves and resolves the cruciform DNA. This chain is Crossover junction endodeoxyribonuclease RuvC, found in Yersinia enterocolitica serotype O:8 / biotype 1B (strain NCTC 13174 / 8081).